A 576-amino-acid chain; its full sequence is Sulfite reductase [NADPH] hemoprotein beta-component (576 aa).

Positions 435, 441, 480, and 484 each coordinate [4Fe-4S] cluster. Cys484 serves as a coordination point for siroheme.

It belongs to the nitrite and sulfite reductase 4Fe-4S domain family. In terms of assembly, alpha(8)-beta(8). The alpha component is a flavoprotein, the beta component is a hemoprotein. The cofactor is siroheme. Requires [4Fe-4S] cluster as cofactor.

It catalyses the reaction hydrogen sulfide + 3 NADP(+) + 3 H2O = sulfite + 3 NADPH + 4 H(+). Its pathway is sulfur metabolism; hydrogen sulfide biosynthesis; hydrogen sulfide from sulfite (NADPH route): step 1/1. Component of the sulfite reductase complex that catalyzes the 6-electron reduction of sulfite to sulfide. This is one of several activities required for the biosynthesis of L-cysteine from sulfate. The polypeptide is Sulfite reductase [NADPH] hemoprotein beta-component (Yersinia pestis bv. Antiqua (strain Antiqua)).